Consider the following 370-residue polypeptide: Ferrochelatase (370 aa).

Residues histidine 210 and glutamate 291 each contribute to the Fe cation site.

It belongs to the ferrochelatase family.

The protein localises to the cytoplasm. The catalysed reaction is heme b + 2 H(+) = protoporphyrin IX + Fe(2+). Its pathway is porphyrin-containing compound metabolism; protoheme biosynthesis; protoheme from protoporphyrin-IX: step 1/1. Catalyzes the ferrous insertion into protoporphyrin IX. The polypeptide is Ferrochelatase (Marinobacter nauticus (strain ATCC 700491 / DSM 11845 / VT8) (Marinobacter aquaeolei)).